A 449-amino-acid chain; its full sequence is UDP-N-acetylmuramoylalanine--D-glutamate ligase (449 aa).

118–124 (GSNGKTT) is an ATP binding site.

Belongs to the MurCDEF family.

It is found in the cytoplasm. It carries out the reaction UDP-N-acetyl-alpha-D-muramoyl-L-alanine + D-glutamate + ATP = UDP-N-acetyl-alpha-D-muramoyl-L-alanyl-D-glutamate + ADP + phosphate + H(+). It participates in cell wall biogenesis; peptidoglycan biosynthesis. Functionally, cell wall formation. Catalyzes the addition of glutamate to the nucleotide precursor UDP-N-acetylmuramoyl-L-alanine (UMA). This chain is UDP-N-acetylmuramoylalanine--D-glutamate ligase, found in Leuconostoc mesenteroides subsp. mesenteroides (strain ATCC 8293 / DSM 20343 / BCRC 11652 / CCM 1803 / JCM 6124 / NCDO 523 / NBRC 100496 / NCIMB 8023 / NCTC 12954 / NRRL B-1118 / 37Y).